A 295-amino-acid chain; its full sequence is Phosphoribosylaminoimidazole-succinocarboxamide synthase (295 aa).

This sequence belongs to the SAICAR synthetase family.

The enzyme catalyses 5-amino-1-(5-phospho-D-ribosyl)imidazole-4-carboxylate + L-aspartate + ATP = (2S)-2-[5-amino-1-(5-phospho-beta-D-ribosyl)imidazole-4-carboxamido]succinate + ADP + phosphate + 2 H(+). Its pathway is purine metabolism; IMP biosynthesis via de novo pathway; 5-amino-1-(5-phospho-D-ribosyl)imidazole-4-carboxamide from 5-amino-1-(5-phospho-D-ribosyl)imidazole-4-carboxylate: step 1/2. The polypeptide is Phosphoribosylaminoimidazole-succinocarboxamide synthase (Desulforapulum autotrophicum (strain ATCC 43914 / DSM 3382 / VKM B-1955 / HRM2) (Desulfobacterium autotrophicum)).